The following is a 286-amino-acid chain: Shikimate dehydrogenase (NADP(+)) (286 aa).

Residues 19 to 21 and Thr66 each bind shikimate; that span reads SVS. The active-site Proton acceptor is the Lys70. Residues Asn91 and Asp106 each contribute to the shikimate site. NADP(+) is bound by residues 130-134 and Ala225; that span reads GAGGS. Tyr227 is a shikimate binding site. Gly248 provides a ligand contact to NADP(+).

The protein belongs to the shikimate dehydrogenase family. Homodimer.

It catalyses the reaction shikimate + NADP(+) = 3-dehydroshikimate + NADPH + H(+). It participates in metabolic intermediate biosynthesis; chorismate biosynthesis; chorismate from D-erythrose 4-phosphate and phosphoenolpyruvate: step 4/7. Functionally, involved in the biosynthesis of the chorismate, which leads to the biosynthesis of aromatic amino acids. Catalyzes the reversible NADPH linked reduction of 3-dehydroshikimate (DHSA) to yield shikimate (SA). In Dehalococcoides mccartyi (strain ATCC BAA-2266 / KCTC 15142 / 195) (Dehalococcoides ethenogenes (strain 195)), this protein is Shikimate dehydrogenase (NADP(+)).